A 445-amino-acid polypeptide reads, in one-letter code: UDP-N-acetylmuramoylalanine--D-glutamate ligase (445 aa).

117 to 123 (GSNGKTT) contacts ATP.

Belongs to the MurCDEF family.

The protein localises to the cytoplasm. It catalyses the reaction UDP-N-acetyl-alpha-D-muramoyl-L-alanine + D-glutamate + ATP = UDP-N-acetyl-alpha-D-muramoyl-L-alanyl-D-glutamate + ADP + phosphate + H(+). The protein operates within cell wall biogenesis; peptidoglycan biosynthesis. In terms of biological role, cell wall formation. Catalyzes the addition of glutamate to the nucleotide precursor UDP-N-acetylmuramoyl-L-alanine (UMA). This chain is UDP-N-acetylmuramoylalanine--D-glutamate ligase, found in Neisseria meningitidis serogroup B (strain ATCC BAA-335 / MC58).